A 324-amino-acid chain; its full sequence is NADH-cytochrome b5 reductase 1 (324 aa).

The helical transmembrane segment at 49–69 (LNIVLAFVVGLIGSVVVLLYF) threads the bilayer. An FAD-binding FR-type domain is found at 81 to 184 (TQWQQYRLME…KGPKGQMRYA (104 aa)). FAD contacts are provided by residues 164-179 (GSMK…GPKG) and 190-222 (HIGM…QIDF).

This sequence belongs to the flavoprotein pyridine nucleotide cytochrome reductase family. As to quaternary structure, monomer. Component of the 2-(3-amino-3-carboxypropyl)histidine synthase complex composed of DPH1, DPH2, DPH3 and a NADH-dependent reductase, predominantly CBR1. It depends on FAD as a cofactor.

It localises to the mitochondrion outer membrane. The catalysed reaction is 2 Fe(III)-[cytochrome b5] + NADH = 2 Fe(II)-[cytochrome b5] + NAD(+) + H(+). The enzyme catalyses 2 Fe(3+)-[Dph3] + NADH = 2 Fe(2+)-[Dph3] + NAD(+) + H(+). It functions in the pathway protein modification; peptidyl-diphthamide biosynthesis. Its function is as follows. NADH-dependent reductase for DPH3 and cytochrome b5. Required for the first step of diphthamide biosynthesis, a post-translational modification of histidine which occurs in elongation factor 2. DPH1 and DPH2 transfer a 3-amino-3-carboxypropyl (ACP) group from S-adenosyl-L-methionine (SAM) to a histidine residue, the reaction is assisted by a reduction system comprising DPH3 and a NADH-dependent reductase, predominantly CBR1. By reducing DPH3, also involved in the formation of the tRNA wobble base modification mcm5s 2U (5-methoxycarbonylmethyl-2-thiouridine), mediated by the elongator complex. The cytochrome b5/NADH cytochrome b5 reductase electron transfer system supports the catalytic activity of several sterol biosynthetic enzymes. The polypeptide is NADH-cytochrome b5 reductase 1 (CBR1) (Mycosarcoma maydis (Corn smut fungus)).